Here is a 324-residue protein sequence, read N- to C-terminus: Acetaldehyde dehydrogenase 1 (324 aa).

Residue 18 to 21 participates in NAD(+) binding; sequence SGNI. Residue Cys-136 is the Acyl-thioester intermediate of the active site. NAD(+) is bound by residues 167–175 and Asn-297; that span reads SAGPGTRAN.

This sequence belongs to the acetaldehyde dehydrogenase family.

The enzyme catalyses acetaldehyde + NAD(+) + CoA = acetyl-CoA + NADH + H(+). In Parafrankia sp. (strain EAN1pec), this protein is Acetaldehyde dehydrogenase 1.